Consider the following 259-residue polypeptide: Uridylate kinase (259 aa).

10–13 (KLSG) is an ATP binding site. G52 contributes to the UMP binding site. Residues G53 and R57 each contribute to the ATP site. UMP is bound by residues D72 and 134-141 (NGQPFLTT). Positions 168 and 171 each coordinate ATP. Positions 236–259 (ISSSPEKSEEFGNEVLASPAESTA) are disordered.

It belongs to the UMP kinase family. In terms of assembly, homohexamer.

The protein localises to the cytoplasm. It catalyses the reaction UMP + ATP = UDP + ADP. It functions in the pathway pyrimidine metabolism; CTP biosynthesis via de novo pathway; UDP from UMP (UMPK route): step 1/1. Inhibited by UTP. In terms of biological role, catalyzes the reversible phosphorylation of UMP to UDP. This chain is Uridylate kinase, found in Frankia casuarinae (strain DSM 45818 / CECT 9043 / HFP020203 / CcI3).